Here is a 385-residue protein sequence, read N- to C-terminus: Chorismate synthase (385 aa).

A disordered region spans residues 43 to 63; sequence PDLDRRRPGTSRHVTQRNEPD. NADP(+) contacts are provided by Arg48 and Arg54. FMN contacts are provided by residues 125 to 127, 238 to 239, Gly278, 293 to 297, and Arg319; these read RSS, NA, and KPTSS. Positions 363–372 are enriched in low complexity; that stretch reads AQAPRTETAP. The segment at 363–385 is disordered; the sequence is AQAPRTETAPATPPLDAGDDIEA.

This sequence belongs to the chorismate synthase family. As to quaternary structure, homotetramer. FMNH2 is required as a cofactor.

The catalysed reaction is 5-O-(1-carboxyvinyl)-3-phosphoshikimate = chorismate + phosphate. It participates in metabolic intermediate biosynthesis; chorismate biosynthesis; chorismate from D-erythrose 4-phosphate and phosphoenolpyruvate: step 7/7. Its function is as follows. Catalyzes the anti-1,4-elimination of the C-3 phosphate and the C-6 proR hydrogen from 5-enolpyruvylshikimate-3-phosphate (EPSP) to yield chorismate, which is the branch point compound that serves as the starting substrate for the three terminal pathways of aromatic amino acid biosynthesis. This reaction introduces a second double bond into the aromatic ring system. The chain is Chorismate synthase from Leptothrix cholodnii (strain ATCC 51168 / LMG 8142 / SP-6) (Leptothrix discophora (strain SP-6)).